Reading from the N-terminus, the 275-residue chain is Ribosomal RNA small subunit methyltransferase A (275 aa).

S-adenosyl-L-methionine-binding residues include asparagine 19, leucine 21, glycine 46, glutamate 71, aspartate 94, and asparagine 117.

It belongs to the class I-like SAM-binding methyltransferase superfamily. rRNA adenine N(6)-methyltransferase family. RsmA subfamily.

The protein localises to the cytoplasm. The enzyme catalyses adenosine(1518)/adenosine(1519) in 16S rRNA + 4 S-adenosyl-L-methionine = N(6)-dimethyladenosine(1518)/N(6)-dimethyladenosine(1519) in 16S rRNA + 4 S-adenosyl-L-homocysteine + 4 H(+). In terms of biological role, specifically dimethylates two adjacent adenosines (A1518 and A1519) in the loop of a conserved hairpin near the 3'-end of 16S rRNA in the 30S particle. May play a critical role in biogenesis of 30S subunits. This Burkholderia thailandensis (strain ATCC 700388 / DSM 13276 / CCUG 48851 / CIP 106301 / E264) protein is Ribosomal RNA small subunit methyltransferase A.